The following is a 434-amino-acid chain: Citrate synthase (434 aa).

Active-site residues include H310 and D368.

It belongs to the citrate synthase family.

The enzyme catalyses oxaloacetate + acetyl-CoA + H2O = citrate + CoA + H(+). Its pathway is carbohydrate metabolism; tricarboxylic acid cycle; isocitrate from oxaloacetate: step 1/2. This Bradyrhizobium diazoefficiens (strain JCM 10833 / BCRC 13528 / IAM 13628 / NBRC 14792 / USDA 110) protein is Citrate synthase (gltA).